The primary structure comprises 657 residues: Methionine--tRNA ligase (657 aa).

Residues tyrosine 13–histidine 23 carry the 'HIGH' region motif. Positions lysine 308–serine 312 match the 'KMSKS' region motif. ATP is bound at residue lysine 311. A tRNA-binding domain is found at aspartate 557–lysine 657.

Belongs to the class-I aminoacyl-tRNA synthetase family. MetG type 2B subfamily. As to quaternary structure, homodimer.

Its subcellular location is the cytoplasm. It carries out the reaction tRNA(Met) + L-methionine + ATP = L-methionyl-tRNA(Met) + AMP + diphosphate. In terms of biological role, is required not only for elongation of protein synthesis but also for the initiation of all mRNA translation through initiator tRNA(fMet) aminoacylation. This chain is Methionine--tRNA ligase, found in Staphylococcus aureus (strain MW2).